Reading from the N-terminus, the 429-residue chain is Protein FAM98B (429 aa).

Residues 304-429 form a disordered region; it reads RVPDRGGRPN…GGGGGGYRRY (126 aa). Basic and acidic residues predominate over residues 305–314; the sequence is VPDRGGRPNE. Positions 332 to 429 are enriched in gly residues; the sequence is GGRGGWGGGG…GGGGGGYRRY (98 aa).

The protein belongs to the FAM98 family. Homodimer. Component of a tRNA-splicing ligase complex. Interacts with FAM98A.

The protein localises to the nucleus. It is found in the cytoplasm. Functionally, positively stimulates PRMT1-induced protein arginine dimethylated arginine methylation. The sequence is that of Protein FAM98B (Fam98b) from Mus musculus (Mouse).